The chain runs to 402 residues: CCA-adding enzyme (402 aa).

ATP-binding residues include Gly-32 and Arg-35. 2 residues coordinate CTP: Gly-32 and Arg-35. Positions 45 and 47 each coordinate Mg(2+). Arg-116, Asp-159, Arg-162, Arg-165, and Arg-168 together coordinate ATP. Positions 116, 159, 162, 165, and 168 each coordinate CTP.

This sequence belongs to the tRNA nucleotidyltransferase/poly(A) polymerase family. Bacterial CCA-adding enzyme type 3 subfamily. In terms of assembly, homodimer. Mg(2+) is required as a cofactor.

The enzyme catalyses a tRNA precursor + 2 CTP + ATP = a tRNA with a 3' CCA end + 3 diphosphate. The catalysed reaction is a tRNA with a 3' CCA end + 2 CTP + ATP = a tRNA with a 3' CCACCA end + 3 diphosphate. Catalyzes the addition and repair of the essential 3'-terminal CCA sequence in tRNAs without using a nucleic acid template. Adds these three nucleotides in the order of C, C, and A to the tRNA nucleotide-73, using CTP and ATP as substrates and producing inorganic pyrophosphate. tRNA 3'-terminal CCA addition is required both for tRNA processing and repair. Also involved in tRNA surveillance by mediating tandem CCA addition to generate a CCACCA at the 3' terminus of unstable tRNAs. While stable tRNAs receive only 3'-terminal CCA, unstable tRNAs are marked with CCACCA and rapidly degraded. This Streptococcus pyogenes serotype M2 (strain MGAS10270) protein is CCA-adding enzyme.